Consider the following 251-residue polypeptide: ATP synthase subunit a (251 aa).

The next 5 membrane-spanning stretches (helical) occupy residues 28 to 48 (TDTV…AFFL), 84 to 104 (IAPF…ISNW), 130 to 150 (INYV…AGIW), 192 to 212 (IFAG…IMWA), and 220 to 240 (FDLF…ILYF).

Belongs to the ATPase A chain family. In terms of assembly, F-type ATPases have 2 components, CF(1) - the catalytic core - and CF(0) - the membrane proton channel. CF(1) has five subunits: alpha(3), beta(3), gamma(1), delta(1), epsilon(1). CF(0) has three main subunits: a(1), b(2) and c(9-12). The alpha and beta chains form an alternating ring which encloses part of the gamma chain. CF(1) is attached to CF(0) by a central stalk formed by the gamma and epsilon chains, while a peripheral stalk is formed by the delta and b chains.

Its subcellular location is the cell membrane. In terms of biological role, key component of the proton channel; it plays a direct role in the translocation of protons across the membrane. The protein is ATP synthase subunit a of Mycobacterium leprae (strain TN).